Reading from the N-terminus, the 778-residue chain is uncharacterized protein (778 aa).

The PE domain maps to 1–92; the sequence is MSFVIAVPEA…GARSYVVAEA (92 aa). Disordered stretches follow at residues 125–163, 372–510, and 718–778; these read ADGT…AGLI, TGLA…GDAF, and QGGL…GADG. Gly residues-rich tracts occupy residues 402–429, 436–510, and 718–763; these read NQTG…GGLG, DGTG…GDAF, and QGGL…GSSG.

The protein belongs to the mycobacterial PE family. PGRS subfamily.

This is an uncharacterized protein from Mycobacterium bovis (strain ATCC BAA-935 / AF2122/97).